Consider the following 1417-residue polypeptide: DNA-directed RNA polymerase subunit beta' (1417 aa).

Positions 68, 70, 83, and 86 each coordinate Zn(2+). The Mg(2+) site is built by D458, D460, and D462. Positions 811, 884, 891, and 894 each coordinate Zn(2+).

The protein belongs to the RNA polymerase beta' chain family. The RNAP catalytic core consists of 2 alpha, 1 beta, 1 beta' and 1 omega subunit. When a sigma factor is associated with the core the holoenzyme is formed, which can initiate transcription. Mg(2+) is required as a cofactor. Zn(2+) serves as cofactor.

The enzyme catalyses RNA(n) + a ribonucleoside 5'-triphosphate = RNA(n+1) + diphosphate. DNA-dependent RNA polymerase catalyzes the transcription of DNA into RNA using the four ribonucleoside triphosphates as substrates. The sequence is that of DNA-directed RNA polymerase subunit beta' from Francisella tularensis subsp. tularensis (strain FSC 198).